The sequence spans 556 residues: Cholesterol oxidase (556 aa).

The FAD site is built by glycine 18, glutamate 37, glycine 88, alanine 93, and valine 235. The Proton acceptor role is filled by histidine 471. Glycine 504 contacts FAD.

The protein belongs to the GMC oxidoreductase family. FAD serves as cofactor.

The enzyme catalyses cholesterol + O2 = cholest-5-en-3-one + H2O2. The catalysed reaction is cholest-5-en-3-one = cholest-4-en-3-one. It participates in steroid metabolism; cholesterol degradation. Functionally, bifunctional enzyme that catalyzes the oxidation and isomerization of cholesterol to cholestenone (cholest-4-en-3-one), an initial step in the cholesterol degradation process. This chain is Cholesterol oxidase, found in Acinetobacter baumannii.